The primary structure comprises 618 residues: UvrABC system protein C (618 aa).

The region spanning 13–92 (DKPGVYLMKN…IKKYRPKYNI (80 aa)) is the GIY-YIG domain. The UVR domain occupies 204–239 (LDIVENFKLNMEKAAENLEFEKAAMLRDKINIIEKI).

The protein belongs to the UvrC family. Interacts with UvrB in an incision complex.

It is found in the cytoplasm. In terms of biological role, the UvrABC repair system catalyzes the recognition and processing of DNA lesions. UvrC both incises the 5' and 3' sides of the lesion. The N-terminal half is responsible for the 3' incision and the C-terminal half is responsible for the 5' incision. This is UvrABC system protein C from Clostridium botulinum (strain Kyoto / Type A2).